Here is a 413-residue protein sequence, read N- to C-terminus: ATP phosphoribosyltransferase 2, chloroplastic (413 aa).

Residues 1–57 constitute a chloroplast transit peptide; it reads MPISIPLNATLQYSSPSSSSSSSSLVPSSPLFSPIPSTTVSLTGIRQRCLRMVTSCV.

Belongs to the ATP phosphoribosyltransferase family. Long subfamily. The cofactor is Mg(2+).

It localises to the plastid. The protein localises to the chloroplast. It catalyses the reaction 1-(5-phospho-beta-D-ribosyl)-ATP + diphosphate = 5-phospho-alpha-D-ribose 1-diphosphate + ATP. It participates in amino-acid biosynthesis; L-histidine biosynthesis; L-histidine from 5-phospho-alpha-D-ribose 1-diphosphate: step 1/9. Feedback inhibited by L-histidine. Its function is as follows. Catalyzes the condensation of ATP and 5-phosphoribose 1-diphosphate to form N'-(5'-phosphoribosyl)-ATP (PR-ATP). This Arabidopsis thaliana (Mouse-ear cress) protein is ATP phosphoribosyltransferase 2, chloroplastic (HISN1B).